The following is a 138-amino-acid chain: DASH complex subunit DAD2 (138 aa).

Residues 1-14 (MSGFSSRPLSTHLR) show a composition bias toward polar residues. Disordered regions lie at residues 1–25 (MSGF…QGQS) and 116–138 (PTEH…SGRG).

This sequence belongs to the DASH complex DAD2 family. In terms of assembly, component of the DASH complex consisting of ASK1, DAD1, DAD2, DAD3, DAD4, DAM1, DUO1, HSK3, SPC19 and SPC34, with a stoichiometry of one copy of each subunit per complex. Multiple DASH complexes oligomerize to form a ring that encircles spindle microtubules and organizes the rod-like NDC80 complexes of the outer kinetochore. DASH complex oligomerization strengthens microtubule attachments. On cytoplasmic microtubules, DASH complexes appear to form patches instead of rings.

The protein resides in the chromosome. It localises to the centromere. Its subcellular location is the kinetochore. The protein localises to the cytoplasm. It is found in the cytoskeleton. The protein resides in the spindle. It localises to the nucleus. Its function is as follows. Component of the DASH complex that connects microtubules with kinetochores and couples microtubule depolymerisation to chromosome movement; it is involved in retrieving kinetochores to the spindle poles before their re-orientation on the spindle in early mitosis and allows microtubule depolymerization to pull chromosomes apart and resist detachment during anaphase. Kinetochores, consisting of a centromere-associated inner segment and a microtubule-contacting outer segment, play a crucial role in chromosome segregation by mediating the physical connection between centromeric DNA and microtubules. Kinetochores also serve as an input point for the spindle assembly checkpoint, which delays anaphase until all chromosomes have bioriented on the mitotic spindle. This is DASH complex subunit DAD2 from Chaetomium thermophilum (strain DSM 1495 / CBS 144.50 / IMI 039719) (Thermochaetoides thermophila).